The sequence spans 510 residues: 2,3-bisphosphoglycerate-independent phosphoglycerate mutase (510 aa).

The Mn(2+) site is built by aspartate 10 and serine 60. The Phosphoserine intermediate role is filled by serine 60. Substrate is bound by residues histidine 121, 150–151 (RD), arginine 182, arginine 188, 252–255 (RPDR), and lysine 325. Residues aspartate 392, histidine 396, aspartate 433, histidine 434, and histidine 451 each contribute to the Mn(2+) site.

This sequence belongs to the BPG-independent phosphoglycerate mutase family. Mn(2+) is required as a cofactor.

It is found in the plastid. Its subcellular location is the chloroplast. It catalyses the reaction (2R)-2-phosphoglycerate = (2R)-3-phosphoglycerate. Its pathway is carbohydrate degradation; glycolysis; pyruvate from D-glyceraldehyde 3-phosphate: step 3/5. Functionally, catalyzes the interconversion of 2-phosphoglycerate and 3-phosphoglycerate. The sequence is that of 2,3-bisphosphoglycerate-independent phosphoglycerate mutase from Gracilaria tenuistipitata var. liui (Red alga).